Consider the following 321-residue polypeptide: MNKENHSLIAEFILTGFTYHPKLKTVLFVVFFAIYLITMVGNIGLVALIYIEQRLHTPMYIFLGNLVLMDSCCSSAITPKMLENFFSEDKRITLYECMAQFYFLCLAETTDCFLLAAMAYDCYVAICNPLQYHTMMSKTLCIQMTAGAYLAGNLHPMIEVEFLLRLTFCGSHQINHFFCDVLPLYRLSCINPYINELVLFILAGSIQIFTIVLVSYFYILFTIFTMKSKEGRGKALSTCASHFLSVSIFCDSLLFMYARPGAVNEGDKDIPVAIFYTLVIPLLNPFIYSLRNKEVINIMKKIMKKRKFCHILKQMSSPLAT.

Residues 1 to 25 are Extracellular-facing; sequence MNKENHSLIAEFILTGFTYHPKLKT. N5 carries N-linked (GlcNAc...) asparagine glycosylation. The chain crosses the membrane as a helical span at residues 26-46; sequence VLFVVFFAIYLITMVGNIGLV. The Cytoplasmic segment spans residues 47–56; that stretch reads ALIYIEQRLH. Residues 57–77 form a helical membrane-spanning segment; that stretch reads TPMYIFLGNLVLMDSCCSSAI. Over 78–97 the chain is Extracellular; the sequence is TPKMLENFFSEDKRITLYEC. A disulfide bond links C97 and C179. Residues 98–118 form a helical membrane-spanning segment; that stretch reads MAQFYFLCLAETTDCFLLAAM. The Cytoplasmic segment spans residues 119 to 143; the sequence is AYDCYVAICNPLQYHTMMSKTLCIQ. A helical transmembrane segment spans residues 144–164; it reads MTAGAYLAGNLHPMIEVEFLL. The Extracellular segment spans residues 165 to 196; that stretch reads RLTFCGSHQINHFFCDVLPLYRLSCINPYINE. A helical transmembrane segment spans residues 197 to 217; that stretch reads LVLFILAGSIQIFTIVLVSYF. Topologically, residues 218 to 235 are cytoplasmic; the sequence is YILFTIFTMKSKEGRGKA. The helical transmembrane segment at 236–256 threads the bilayer; the sequence is LSTCASHFLSVSIFCDSLLFM. Topologically, residues 257–269 are extracellular; the sequence is YARPGAVNEGDKD. The chain crosses the membrane as a helical span at residues 270–290; it reads IPVAIFYTLVIPLLNPFIYSL. The Cytoplasmic segment spans residues 291–321; sequence RNKEVINIMKKIMKKRKFCHILKQMSSPLAT.

It belongs to the G-protein coupled receptor 1 family.

It is found in the cell membrane. Its function is as follows. Odorant receptor. The sequence is that of Olfactory receptor 5K3 (OR5K3) from Homo sapiens (Human).